The following is a 249-amino-acid chain: NAD(P)H-quinone oxidoreductase subunit T, chloroplastic (249 aa).

A chloroplast-targeting transit peptide spans Met-1–Ala-45. Residues Tyr-44–Asp-84 form a disordered region. The 67-residue stretch at Ser-106 to Leu-172 folds into the J domain. A helical transmembrane segment spans residues Leu-224–Phe-244.

In terms of assembly, part of the chloroplast NDH complex, composed of a mixture of chloroplast and nucleus encoded subunits. Component of the electron donor-binding subcomplex, at least composed of NDHS, NDHT and NDHU.

Its subcellular location is the plastid. The protein localises to the chloroplast thylakoid membrane. The catalysed reaction is a plastoquinone + NADH + (n+1) H(+)(in) = a plastoquinol + NAD(+) + n H(+)(out). It carries out the reaction a plastoquinone + NADPH + (n+1) H(+)(in) = a plastoquinol + NADP(+) + n H(+)(out). In terms of biological role, NDH shuttles electrons from NAD(P)H:plastoquinone, via FMN and iron-sulfur (Fe-S) centers, to quinones in the photosynthetic chain and possibly in a chloroplast respiratory chain. The immediate electron acceptor for the enzyme in this species is believed to be plastoquinone. Couples the redox reaction to proton translocation, and thus conserves the redox energy in a proton gradient. Required for the accumulation of both the NDH subcomplex A and NDHS. The sequence is that of NAD(P)H-quinone oxidoreductase subunit T, chloroplastic from Arabidopsis thaliana (Mouse-ear cress).